The sequence spans 194 residues: ATP-dependent Clp protease proteolytic subunit 3 (194 aa).

Residue S96 is the Nucleophile of the active site. Residue H121 is part of the active site.

This sequence belongs to the peptidase S14 family. Fourteen ClpP subunits assemble into 2 heptameric rings which stack back to back to give a disk-like structure with a central cavity, resembling the structure of eukaryotic proteasomes.

It is found in the cytoplasm. It catalyses the reaction Hydrolysis of proteins to small peptides in the presence of ATP and magnesium. alpha-casein is the usual test substrate. In the absence of ATP, only oligopeptides shorter than five residues are hydrolyzed (such as succinyl-Leu-Tyr-|-NHMec, and Leu-Tyr-Leu-|-Tyr-Trp, in which cleavage of the -Tyr-|-Leu- and -Tyr-|-Trp bonds also occurs).. Functionally, cleaves peptides in various proteins in a process that requires ATP hydrolysis. Has a chymotrypsin-like activity. Plays a major role in the degradation of misfolded proteins. This Rhizobium etli (strain ATCC 51251 / DSM 11541 / JCM 21823 / NBRC 15573 / CFN 42) protein is ATP-dependent Clp protease proteolytic subunit 3.